The chain runs to 104 residues: Integration host factor subunit beta (104 aa).

It belongs to the bacterial histone-like protein family. In terms of assembly, heterodimer of an alpha and a beta chain.

Its function is as follows. This protein is one of the two subunits of integration host factor, a specific DNA-binding protein that functions in genetic recombination as well as in transcriptional and translational control. In Neisseria gonorrhoeae, this protein is Integration host factor subunit beta (ihfB).